The primary structure comprises 65 residues: Beta-defensin 106A (65 aa).

A signal peptide spans 1 to 20 (MRTFLFLFAVLFFLTPAKNE). 3 cysteine pairs are disulfide-bonded: cysteine 26/cysteine 53, cysteine 33/cysteine 47, and cysteine 37/cysteine 54.

It belongs to the beta-defensin family. In terms of assembly, monomer. Interacts with CCR2 (via extracellular N-terminal region); this interaction may preferentially require specific tyrosine sulfation on CCR2.

The protein localises to the secreted. It localises to the membrane. Functionally, has antibacterial activity. Acts as a ligand for C-C chemokine receptor CCR2. This is Beta-defensin 106A (DEFB106A) from Pongo pygmaeus (Bornean orangutan).